Here is a 272-residue protein sequence, read N- to C-terminus: HMP-PP phosphatase (272 aa).

Asp8 serves as the catalytic Nucleophile. Mg(2+)-binding residues include Asp8, Asp10, and Asp212.

This sequence belongs to the HAD-like hydrolase superfamily. Cof family. Requires Mg(2+) as cofactor.

The enzyme catalyses 4-amino-2-methyl-5-(diphosphooxymethyl)pyrimidine + H2O = 4-amino-2-methyl-5-(phosphooxymethyl)pyrimidine + phosphate + H(+). Functionally, catalyzes the hydrolysis of 4-amino-2-methyl-5-hydroxymethylpyrimidine pyrophosphate (HMP-PP) to 4-amino-2-methyl-5-hydroxymethylpyrimidine phosphate (HMP-P). In Salmonella enteritidis PT4 (strain P125109), this protein is HMP-PP phosphatase.